We begin with the raw amino-acid sequence, 395 residues long: E3 ubiquitin-protein ligase NHLRC1 (395 aa).

Residues 26 to 72 (CKVCFEKFGHRQQRRPRNLSCGHVVCLACVAALAHPRTLALECPFCR) form an RING-type zinc finger. 6 NHL repeats span residues 113–157 (ALTC…FDSG), 161–204 (AHQF…FDFF), 205–245 (GQIK…LDVD), 248–300 (EGVL…FSSS), 301–349 (MQLV…LGKP), and 350–393 (EEFP…YKVD).

Interacts with AGL. Interacts (via the NHL repeats) with EPM2A/laforin. Forms a complex with EPM2A/laforin and HSP70. Interacts with PRDM8. In terms of tissue distribution, expressed in brain, cerebellum, spinal cord, medulla, heart, liver, skeletal muscle and pancreas.

The protein localises to the endoplasmic reticulum. It localises to the nucleus. It catalyses the reaction S-ubiquitinyl-[E2 ubiquitin-conjugating enzyme]-L-cysteine + [acceptor protein]-L-lysine = [E2 ubiquitin-conjugating enzyme]-L-cysteine + N(6)-ubiquitinyl-[acceptor protein]-L-lysine.. Its pathway is protein modification; protein ubiquitination. Its function is as follows. E3 ubiquitin-protein ligase. Together with the phosphatase EPM2A/laforin, appears to be involved in the clearance of toxic polyglucosan and protein aggregates via multiple pathways. In complex with EPM2A/laforin and HSP70, suppresses the cellular toxicity of misfolded proteins by promoting their degradation through the ubiquitin-proteasome system (UPS). Ubiquitinates the glycogen-targeting protein phosphatase subunits PPP1R3C/PTG and PPP1R3D in a laforin-dependent manner and targets them for proteasome-dependent degradation, thus decreasing glycogen accumulation. Polyubiquitinates EPM2A/laforin and ubiquitinates AGL and targets them for proteasome-dependent degradation. Also promotes proteasome-independent protein degradation through the macroautophagy pathway. In Homo sapiens (Human), this protein is E3 ubiquitin-protein ligase NHLRC1 (NHLRC1).